The following is a 161-amino-acid chain: Nucleotide-binding protein Bphy_0527 (161 aa).

It belongs to the YajQ family.

Nucleotide-binding protein. The sequence is that of Nucleotide-binding protein Bphy_0527 from Paraburkholderia phymatum (strain DSM 17167 / CIP 108236 / LMG 21445 / STM815) (Burkholderia phymatum).